Reading from the N-terminus, the 409-residue chain is Odorant receptor 35a (409 aa).

Topologically, residues 1–35 are cytoplasmic; the sequence is MVRYVPRFADGQKVKLAWPLAVFRLNHIFWPLDPS. The chain crosses the membrane as a helical span at residues 36–56; that stretch reads TGKWGRYLDKVLAVAMSLVFM. The Extracellular portion of the chain corresponds to 57 to 64; sequence QHNDAELR. Residues 65 to 85 form a helical membrane-spanning segment; the sequence is YLRFEASNRNLDAFLTGMPTY. Residues 86–139 lie on the Cytoplasmic side of the membrane; that stretch reads LILVEAQFRSLHILLHFEKLQKFLEIFYANIYIDPRKEPEMFRKVDGKMIINRL. Residues 140-160 form a helical membrane-spanning segment; the sequence is VSAMYGAVISLYLIAPVFSII. N-linked (GlcNAc...) asparagine glycosylation occurs at Asn161. Topologically, residues 161-177 are extracellular; the sequence is NQSKDFLYSMIFPFDSD. The helical transmembrane segment at 178–198 threads the bilayer; it reads PLYIFVPLLLTNVWVGIVIDT. The Cytoplasmic portion of the chain corresponds to 199–273; it reads MMFGETNLLC…QQLEAQYTVR (75 aa). The chain crosses the membrane as a helical span at residues 274–294; that stretch reads VFIMFAFAAGLLCALSFKAYT. Topologically, residues 295–302 are extracellular; it reads NPMANYIY. A helical membrane pass occupies residues 303-323; it reads AIWFGAKTVELLSLGQIGSDL. Residues 324-379 lie on the Cytoplasmic side of the membrane; sequence AFTTDSLSTMYYLTHWEQILQYSTNPSENLRLLKLINLAIEMNSKPFYVTGLKYFR. Residues 380–400 form a helical membrane-spanning segment; that stretch reads VSLQAGLKILQASFSYFTFLT. Over 401–409 the chain is Extracellular; sequence SMQRRQMSN.

The protein belongs to the insect chemoreceptor superfamily. Heteromeric odorant receptor channel (TC 1.A.69) family. Or1a subfamily. Interacts with Orco. Complexes exist early in the endomembrane system in olfactory sensory neurons (OSNs), coupling these complexes to the conserved ciliary trafficking pathway. Expressed in ac3B olfactory sensory neurons in the antenna.

The protein resides in the cell membrane. Its function is as follows. Odorant receptor which mediates acceptance or avoidance behavior, depending on its substrates. The odorant receptor repertoire encodes a large collection of odor stimuli that vary widely in identity, intensity, and duration. Forms a complex with Orco to form odorant-sensing units, providing sensitive and prolonged odorant signaling and calcium permeability. Involved in the behavioral responses to esters. Involved in the behavioral responses to butanol, pentanol, hexanol, octanol, propyl acetate, and butyl acetate. This is Odorant receptor 35a (Or35a) from Drosophila melanogaster (Fruit fly).